Consider the following 232-residue polypeptide: Small ribosomal subunit protein uS2 (232 aa).

The protein belongs to the universal ribosomal protein uS2 family.

The protein is Small ribosomal subunit protein uS2 of Alkaliphilus oremlandii (strain OhILAs) (Clostridium oremlandii (strain OhILAs)).